Here is a 216-residue protein sequence, read N- to C-terminus: Small ribosomal subunit protein uS3 (216 aa).

The 72-residue stretch at Leu20–His91 folds into the KH type-2 domain.

It belongs to the universal ribosomal protein uS3 family.

The polypeptide is Small ribosomal subunit protein uS3 (RPS3) (Encephalitozoon cuniculi (strain GB-M1) (Microsporidian parasite)).